Reading from the N-terminus, the 94-residue chain is MAKGQSLQDPFLNALRRERVPVSIYLVNGIKLQGQVESFDQFVILLKNTVSQMVYKHAISTVVPARPFNVSAHHSSPAPTPAGGFNGQNDETSE.

The Sm domain occupies 9–68 (DPFLNALRRERVPVSIYLVNGIKLQGQVESFDQFVILLKNTVSQMVYKHAISTVVPARPF). Positions 70–94 (VSAHHSSPAPTPAGGFNGQNDETSE) are disordered.

This sequence belongs to the Hfq family. In terms of assembly, homohexamer.

RNA chaperone that binds small regulatory RNA (sRNAs) and mRNAs to facilitate mRNA translational regulation in response to envelope stress, environmental stress and changes in metabolite concentrations. Also binds with high specificity to tRNAs. This is RNA-binding protein Hfq from Shewanella woodyi (strain ATCC 51908 / MS32).